The sequence spans 172 residues: MHCPFCGEADTKVIDSRLVAEGDQVRRRRECLSCRERFTTFETAELVMPRVVKQDGTRQPFDEEKLRAGIMKALEKRPVSIEEIDAALNRIKYRLRSTGEREVKSMQLGEEVMTELRQLDKVAYVRFASVYRSFQDINEFKEEIERLSQGNGDTAVDVARALVDNGTDKGKA.

A zinc finger lies at 3–34; sequence CPFCGEADTKVIDSRLVAEGDQVRRRRECLSC. Residues 49–139 enclose the ATP-cone domain; the sequence is PRVVKQDGTR…VYRSFQDINE (91 aa).

It belongs to the NrdR family. It depends on Zn(2+) as a cofactor.

In terms of biological role, negatively regulates transcription of bacterial ribonucleotide reductase nrd genes and operons by binding to NrdR-boxes. The sequence is that of Transcriptional repressor NrdR from Marinobacter nauticus (strain ATCC 700491 / DSM 11845 / VT8) (Marinobacter aquaeolei).